The sequence spans 1196 residues: Tubulin-specific chaperone D (1196 aa).

HEAT repeat units lie at residues 363–401 (VIEQ…ADDV), 599–634 (YIAM…TYAL), 752–788 (SSIA…PGFL), and 1106–1142 (GDVR…VLTY).

Belongs to the TBCD family. In terms of assembly, found in a complex with at least ARL2, PPP2CB, PPP2R1A, PPP2R2A, PPP2R5E and TBCD. Interacts with PPP2CB. Part of a supercomplex made of cofactors A to E. Cofactors A and D function by capturing and stabilizing tubulin in a quasi-native conformation. Cofactor E binds to the cofactor D-tubulin complex; interaction with cofactor C then causes the release of tubulin polypeptides that are committed to the native state. Interacts with ARL2; interaction is enhanced with the GDP-bound form of ARL2. Does not interact with ARL3, ARL4A and ARL4D. Interacts with beta tubulin. Interacts with TBCE.

The protein localises to the cell junction. It is found in the tight junction. Its subcellular location is the lateral cell membrane. The protein resides in the cytoplasm. It localises to the adherens junction. The protein localises to the cytoskeleton. It is found in the microtubule organizing center. Its subcellular location is the centrosome. Functionally, tubulin-folding protein implicated in the first step of the tubulin folding pathway and required for tubulin complex assembly. Involved in the regulation of microtubule polymerization or depolymerization, it modulates microtubule dynamics by capturing GTP-bound beta-tubulin (TUBB). Its ability to interact with beta tubulin is regulated via its interaction with ARL2. Acts as a GTPase-activating protein (GAP) for ARL2. Induces microtubule disruption in absence of ARL2. Increases degradation of beta tubulin, when overexpressed in polarized cells. Promotes epithelial cell detachment, a process antagonized by ARL2. Induces tight adherens and tight junctions disassembly at the lateral cell membrane. Required for correct assembly and maintenance of the mitotic spindle, and proper progression of mitosis. Involved in neuron morphogenesis. This is Tubulin-specific chaperone D (Tbcd) from Mus musculus (Mouse).